The following is a 487-amino-acid chain: NADH-quinone oxidoreductase subunit N (487 aa).

A run of 14 helical transmembrane segments spans residues 8–28 (LLALLPLLLTTGAMVALMLAI), 37–57 (AFVVTIAGLNLALFSLPIVMA), 71–91 (GYAVFYMGLVLIGALATCTFG), 104–124 (EFYLLLLIATAGGLVLAGSRH), 125–145 (LASLFIGIEMLTLPMFGLVGY), 159–179 (YMVLSAAATAFLLFGMALLYA), 203–223 (LMGGLGLMLVGFAFKLSLAPF), 235–255 (PAPVATFLATVSKIAVFCVLL), 269–289 (IHWLLAAMAVISIVIGNLLAL), 303–323 (ISHFGYLLAVIVASRLGQMPV), 327–347 (GVYLLMYLFTSLGAFGVISMM), 374–394 (AVLTVMMLSLAGIPMTLGFIG), 408–427 (WWLSGAIVLGSALGLYYYLR), and 449–469 (AITSGGLVVLLSAALVVALGL).

It belongs to the complex I subunit 2 family. In terms of assembly, NDH-1 is composed of 14 different subunits. Subunits NuoA, H, J, K, L, M, N constitute the membrane sector of the complex.

The protein localises to the cell inner membrane. It carries out the reaction a quinone + NADH + 5 H(+)(in) = a quinol + NAD(+) + 4 H(+)(out). Its function is as follows. NDH-1 shuttles electrons from NADH, via FMN and iron-sulfur (Fe-S) centers, to quinones in the respiratory chain. The immediate electron acceptor for the enzyme in this species is believed to be ubiquinone. Couples the redox reaction to proton translocation (for every two electrons transferred, four hydrogen ions are translocated across the cytoplasmic membrane), and thus conserves the redox energy in a proton gradient. This Aeromonas hydrophila subsp. hydrophila (strain ATCC 7966 / DSM 30187 / BCRC 13018 / CCUG 14551 / JCM 1027 / KCTC 2358 / NCIMB 9240 / NCTC 8049) protein is NADH-quinone oxidoreductase subunit N.